Reading from the N-terminus, the 340-residue chain is DnaJ homolog subfamily C member 22 (340 aa).

The region spanning methionine 1–tryptophan 50 is the TM2 domain. 7 helical membrane passes run leucine 5–leucine 25, histidine 30–tryptophan 50, phenylalanine 81–phenylalanine 101, phenylalanine 105–glycine 125, leucine 135–isoleucine 155, isoleucine 186–serine 206, and valine 212–leucine 232. A J domain is found at methionine 278 to leucine 340.

It is found in the membrane. May function as a co-chaperone. This chain is DnaJ homolog subfamily C member 22 (dnajc22), found in Xenopus tropicalis (Western clawed frog).